Consider the following 158-residue polypeptide: SUMO-conjugating enzyme UBC9 (158 aa).

The region spanning Ile4–Pro157 is the UBC core domain. The interval Arg13–Lys18 is interaction with SUMO1. The Glycyl thioester intermediate role is filled by Cys93.

The protein belongs to the ubiquitin-conjugating enzyme family. As to quaternary structure, interacts with SOX9.

The protein localises to the nucleus. It localises to the cytoplasm. It functions in the pathway protein modification; protein sumoylation. In terms of biological role, accepts the ubiquitin-like proteins SUMO1, SUMO2 and SUMO3 from the UBLE1A-UBLE1B E1 complex and catalyzes their covalent attachment to other proteins with the help of an E3 ligase such as RANBP2 or CBX4. Essential for nuclear architecture and chromosome segregation. In Gallus gallus (Chicken), this protein is SUMO-conjugating enzyme UBC9 (UBE2I).